A 330-amino-acid polypeptide reads, in one-letter code: MISLESQVLERHLSFFDGKSVLFAGGISDNFPQTLASKCPSIQIWSCHFDYARTQSAVNFSVEFQGQADLIVYYWTKNKQEVNFQLLQLLAQAPIGQEILIIGENRCGVRSVEKTLAPYGEIAKIDSARRCGLYHFSLQNKPHFELKNFWKTYQHSTLENLTIYSLPGVFSAAELDTGTELLLSTIDNKIKGKVLDLGCGAGVIGSMIKKRVPNAQITMTDIHAMALESARKTLSENQLQGKVYASDVFSDIEGKFDLIISNPPFHDGIDTAYRAVTELITQAKWHLNQYGELRIVANAFLPYPELLRQHFNDYQVLAQTGKFKVYSVKN.

It belongs to the methyltransferase superfamily. RsmC family. In terms of assembly, monomer.

It localises to the cytoplasm. The catalysed reaction is guanosine(1207) in 16S rRNA + S-adenosyl-L-methionine = N(2)-methylguanosine(1207) in 16S rRNA + S-adenosyl-L-homocysteine + H(+). Functionally, specifically methylates the guanine in position 1207 of 16S rRNA in the 30S particle. This Haemophilus influenzae (strain PittEE) protein is Ribosomal RNA small subunit methyltransferase C.